Consider the following 652-residue polypeptide: MQGPLLLPGLCFLLSLFGAVTQKTKTSCAKCPPNASCVNNTHCTCNHGYTSGSGQKLFTFPLETCNDINECTPPYSVYCGFNAVCYNVEGSFYCQCVPGYRLHSGNEQFSNSNENTCQDTTSSKTTEGRKELQKIVDKFESLLTNQTLWRTEGRQEISSTATTILRDVESKVLETALKDPEQKVLKIQNDSVAIETQAITDNCSEERKTFNLNVQMNSMDIRCSDIIQGDTQGPSAIAFISYSSLGNIINATFFEEMDKKDQVYLNSQVVSAAIGPKRNVSLSKSVTLTFQHVKMTPSTKKVFCVYWKSTGQGSQWSRDGCFLIHVNKSHTMCNCSHLSSFAVLMALTSQEEDPVLTVITYVGLSVSLLCLLLAALTFLLCKAIRNTSTSLHLQLSLCLFLAHLLFLVGIDRTEPKVLCSIIAGALHYLYLAAFTWMLLEGVHLFLTARNLTVVNYSSINRLMKWIMFPVGYGVPAVTVAISAASWPHLYGTADRCWLHLDQGFMWSFLGPVCAIFSANLVLFILVFWILKRKLSSLNSEVSTIQNTRMLAFKATAQLFILGCTWCLGLLQVGPAAQVMAYLFTIINSLQGFFIFLVYCLLSQQVQKQYQKWFREIVKSKSESETYTLSSKMGPDSKPSEGDVFPGQVKRKY.

The N-terminal stretch at 1-21 (MQGPLLLPGLCFLLSLFGAVT) is a signal peptide. The Extracellular portion of the chain corresponds to 22-357 (QKTKTSCAKC…TSQEEDPVLT (336 aa)). Residues 24–66 (TKTSCAKCPPNASCVNNTHCTCNHGYTSGSGQKLFTFPLETCN) form the EGF-like 1 domain. 6 disulfides stabilise this stretch: cysteine 28–cysteine 37, cysteine 31–cysteine 43, cysteine 45–cysteine 65, cysteine 71–cysteine 85, cysteine 79–cysteine 94, and cysteine 96–cysteine 117. N-linked (GlcNAc...) asparagine glycosylation is found at asparagine 34 and asparagine 39. The 52-residue stretch at 67 to 118 (DINECTPPYSVYCGFNAVCYNVEGSFYCQCVPGYRLHSGNEQFSNSNENTCQ) folds into the EGF-like 2; calcium-binding domain. Residues asparagine 145, asparagine 189, asparagine 202, asparagine 250, asparagine 279, asparagine 327, and asparagine 334 are each glycosylated (N-linked (GlcNAc...) asparagine). The 169-residue stretch at 183–351 (KVLKIQNDSV…AVLMALTSQE (169 aa)) folds into the GAIN-B domain. 2 cysteine pairs are disulfide-bonded: cysteine 304–cysteine 333 and cysteine 321–cysteine 335. Residues 304 to 351 (CVYWKSTGQGSQWSRDGCFLIHVNKSHTMCNCSHLSSFAVLMALTSQE) form a GPS region. The helical transmembrane segment at 358–378 (VITYVGLSVSLLCLLLAALTF) threads the bilayer. Over 379–389 (LLCKAIRNTST) the chain is Cytoplasmic. A helical transmembrane segment spans residues 390–410 (SLHLQLSLCLFLAHLLFLVGI). The Extracellular segment spans residues 411 to 416 (DRTEPK). The helical transmembrane segment at 417-437 (VLCSIIAGALHYLYLAAFTWM) threads the bilayer. The Cytoplasmic segment spans residues 438–464 (LLEGVHLFLTARNLTVVNYSSINRLMK). Residues 465–485 (WIMFPVGYGVPAVTVAISAAS) form a helical membrane-spanning segment. Over 486–508 (WPHLYGTADRCWLHLDQGFMWSF) the chain is Extracellular. The helical transmembrane segment at 509–529 (LGPVCAIFSANLVLFILVFWI) threads the bilayer. Residues 530 to 557 (LKRKLSSLNSEVSTIQNTRMLAFKATAQ) lie on the Cytoplasmic side of the membrane. Residues 558–578 (LFILGCTWCLGLLQVGPAAQV) traverse the membrane as a helical segment. The Extracellular segment spans residues 579 to 580 (MA). A helical transmembrane segment spans residues 581–601 (YLFTIINSLQGFFIFLVYCLL). Over 602 to 652 (SQQVQKQYQKWFREIVKSKSESETYTLSSKMGPDSKPSEGDVFPGQVKRKY) the chain is Cytoplasmic. The interval 621–652 (SESETYTLSSKMGPDSKPSEGDVFPGQVKRKY) is disordered.

Belongs to the G-protein coupled receptor 2 family. Adhesion G-protein coupled receptor (ADGR) subfamily. Forms a heterodimer, consisting of a large extracellular region (alpha subunit) non-covalently linked to a seven-transmembrane moiety (beta subunit). Proteolytically cleaved into 2 subunits, an extracellular alpha subunit and a seven-transmembrane subunit. As to expression, displays a predominantly leukocyte-restricted expression, with highest levels in neutrophils, monocytes and macrophages.

Its subcellular location is the cell membrane. It is found in the secreted. Functionally, orphan receptor that may play a role myeloid-myeloid interactions during immune and inflammatory responses. A ligand for the soluble form of this receptor is present at the surface of monocytes-derived macrophages and activated neutrophils. The sequence is that of Adhesion G protein-coupled receptor E3 from Homo sapiens (Human).